The sequence spans 340 residues: Ava biosynthesis cluster protein G (340 aa).

Helical transmembrane passes span 15–35 (WSAF…NIWN), 81–101 (FMIS…LQFV), 118–138 (AFFV…VHAF), and 148–168 (LSIM…FLCI). Asn-171 is a glycosylation site (N-linked (GlcNAc...) asparagine). Transmembrane regions (helical) follow at residues 219-239 (FSSV…YVAF) and 315-335 (SALT…WLQI).

It localises to the membrane. The protein operates within secondary metabolite biosynthesis. Its function is as follows. Part of the cluster that mediates the biosynthesis of a highly modified cyclo-arginine-tryptophan dipeptide (cRW). The first step of the pathway is perfornmed by the arginine-containing cyclodipeptide synthase (RCPDS) avaA that acts as the scaffold-generating enzyme and is responsible for formation of the cyclo-Arg-Trp (cRW) diketopiperazine. AvaB then acts as a multifunctional flavoenzyme that is responsible for generating the cyclo-Arg-formylkynurenine DKP, which can be deformylated by avaC. AvaB then further catalyzes an additional N-oxidation followed by cyclization and dehydration. The next step is an N-acetylation of the guanidine group catalyzed by the arginine N-acetyltransferase avaD. The roles of the additional enzymes identified within the ava cluster still have to be determined. The chain is Ava biosynthesis cluster protein G from Aspergillus versicolor.